The primary structure comprises 79 residues: Translational regulator CsrA (79 aa).

The protein belongs to the CsrA/RsmA family. In terms of assembly, homodimer; the beta-strands of each monomer intercalate to form a hydrophobic core, while the alpha-helices form wings that extend away from the core.

The protein localises to the cytoplasm. A translational regulator that binds mRNA to regulate translation initiation and/or mRNA stability. Usually binds in the 5'-UTR at or near the Shine-Dalgarno sequence preventing ribosome-binding, thus repressing translation. Its main target seems to be the major flagellin gene, while its function is anatagonized by FliW. This chain is Translational regulator CsrA, found in Leptospira biflexa serovar Patoc (strain Patoc 1 / Ames).